A 1004-amino-acid polypeptide reads, in one-letter code: E3 ubiquitin-protein ligase NEDD4-like (1004 aa).

The C2 domain occupies 30–154 (LASHHSRGLE…TEDPTMERPY (125 aa)). 2 disordered regions span residues 207-230 (SNDSASQHQEELPPPPLPPGWEEK) and 272-407 (AAHR…TPSV). Residues 221 to 254 (PPLPPGWEEKVDNLGRTYYVNHNNRSTQWHRPSL) enclose the WW 1 domain. Residue Ser341 is modified to Phosphoserine. Thr347 bears the Phosphothreonine mark. 2 stretches are compositionally biased toward polar residues: residues 347–359 (TPDSNGEQFSSLI) and 366–376 (RLRSCSVTDTV). Ser371 carries the phosphoserine; by WNK1 and WNK4 modification. A Phosphothreonine; by SGK1 modification is found at Thr396. Residues 414–447 (PGLPSGWEERKDAKGRTYYVNHNNRTTTWTRPIM) enclose the WW 2 domain. The segment at 453 to 523 (GASGSATNSN…YNSPKPQHKV (71 aa)) is disordered. The residue at position 475 (Ser475) is a Phosphoserine. Residue Ser477 is modified to Phosphoserine; by SGK1. Phosphoserine is present on residues Ser478, Ser493, Ser504, Ser508, Ser512, and Ser516. A compositionally biased stretch (basic and acidic residues) spans 489-500 (GAKDSPIRRAVK). 2 consecutive WW domains span residues 526–559 (SFLPPGWEMRIAPNGRPFFIDHNTKTTTWEDPRL) and 577–610 (GPLPPGWEERIHLDGRTFYIDHNSKITQWEDPRL). Residues 669-1003 (RPDVLKARLW…VENAQGFEGV (335 aa)) enclose the HECT domain. Catalysis depends on Cys971, which acts as the Glycyl thioester intermediate.

In terms of assembly, interacts with UBE2E3. Interacts with NDFIP1; this interaction activates the E3 ubiquitin-protein ligase. Interacts with NDFIP2; this interaction activates the E3 ubiquitin-protein ligase. Interacts (via WW domains) with SCN1A. Interacts (via WW domains) with SCN2A. Interacts (via WW domains) with SCN3A. Interacts (via WW domains) with SCN5A. Interacts (via WW domains) with SCN8A. Interacts (via WW domains) with SCN9A. Interacts (via WW domains) with SCN10A. Interacts (via WW domains) with CLCN5. Interacts with SMAD2. Interacts with SMAD3. Interacts with SMAD6. Interacts with SMAD7. The phosphorylated form interacts with 14-3-3 proteins. Interacts with TNK2. Interacts with WNK1. Interacts with SGK1. Interacts (via C2 domain) with NPC2. Interacts with ARRDC4. Interacts with KCNQ1; promotes internalization of KCNQ1. Interacts (via domains WW1, 3 and 4) with USP36; the interaction inhibits ubiquitination of, at least, NTRK1, KCNQ2 and KCNQ3 by NEDD4L. Interacts with PRRG4 (via cytoplasmic domain). Interacts with LDLRAD3; the interaction is direct. Interacts with UBE2D2. Interacts with TTYH2 and TTYH3. Post-translationally, phosphorylated; which impairs interaction with SCNN. Interaction with YWHAH inhibits dephosphorylation. Aldosterone induces Ser-477 phosphorylation by SGK1. Auto-ubiquitinated. Deubiquitinated by USP36, no effect on NEDD4L protein levels. Both proteins interact and regulate each other's ubiquitination levels. Highly expressed in liver and kidney. Also expressed in heart, brain and lung. Isoform 1 is expressed in kidney, lung and gut. Isoform 3 is ubiquitously expressed.

It is found in the cytoplasm. The protein localises to the golgi apparatus. It localises to the endosome. Its subcellular location is the multivesicular body. The enzyme catalyses S-ubiquitinyl-[E2 ubiquitin-conjugating enzyme]-L-cysteine + [acceptor protein]-L-lysine = [E2 ubiquitin-conjugating enzyme]-L-cysteine + N(6)-ubiquitinyl-[acceptor protein]-L-lysine.. It catalyses the reaction [E2 ubiquitin-conjugating enzyme]-S-ubiquitinyl-L-cysteine + [acceptor protein]-L-cysteine = [E2 ubiquitin-conjugating enzyme]-L-cysteine + [acceptor protein]-S-ubiquitinyl-L-cysteine.. The protein operates within protein modification; protein ubiquitination. With respect to regulation, activated by NDFIP1- and NDFIP2-binding. In terms of biological role, E3 ubiquitin-protein ligase that mediates the polyubiquitination of lysine and cysteine residues on target proteins and is thereby implicated in the regulation of various signaling pathways including autophagy, innate immunity or DNA repair. Inhibits TGF-beta signaling by triggering SMAD2 and TGFBR1 ubiquitination and proteasome-dependent degradation. Downregulates autophagy and cell growth by ubiquitinating and reducing cellular ULK1 or ASCT2 levels. Promotes ubiquitination and internalization of various plasma membrane channels such as ENaC, SCN2A/Nav1.2, SCN3A/Nav1.3, SCN5A/Nav1.5, SCN9A/Nav1.7, SCN10A/Nav1.8, KCNA3/Kv1.3, KCNH2, EAAT1, KCNQ2/Kv7.2, KCNQ3/Kv7.3 or CLC5. Promotes ubiquitination and degradation of SGK1 and TNK2. Ubiquitinates BRAT1 and this ubiquitination is enhanced in the presence of NDFIP1. Plays a role in dendrite formation by melanocytes. Involved in the regulation of TOR signaling. Ubiquitinates and regulates protein levels of NTRK1 once this one is activated by NGF. Plays a role in antiviral innate immunity by catalyzing 'Lys-29'-linked cysteine ubiquitination of TRAF3, resulting in enhanced 'Lys-48' and 'Lys-63'-linked ubiquitination of TRAF3. Ubiquitinates TTYH2 and TYYH3 and regulates protein levels of TTYH2. This Mus musculus (Mouse) protein is E3 ubiquitin-protein ligase NEDD4-like (Nedd4l).